Consider the following 485-residue polypeptide: D-alanine--D-alanyl carrier protein ligase (485 aa).

T144 to S145 is an ATP binding site. D189 is a D-alanine binding site. N284–T289 contributes to the ATP binding site. A D-alanine-binding site is contributed by V293. Positions 365 and 473 each coordinate ATP. K473 contributes to the D-alanine binding site.

The protein belongs to the ATP-dependent AMP-binding enzyme family. DltA subfamily.

Its subcellular location is the cytoplasm. The enzyme catalyses holo-[D-alanyl-carrier protein] + D-alanine + ATP = D-alanyl-[D-alanyl-carrier protein] + AMP + diphosphate. Its pathway is cell wall biogenesis; lipoteichoic acid biosynthesis. Functionally, catalyzes the first step in the D-alanylation of lipoteichoic acid (LTA), the activation of D-alanine and its transfer onto the D-alanyl carrier protein (Dcp) DltC. In an ATP-dependent two-step reaction, forms a high energy D-alanyl-AMP intermediate, followed by transfer of the D-alanyl residue as a thiol ester to the phosphopantheinyl prosthetic group of the Dcp. D-alanylation of LTA plays an important role in modulating the properties of the cell wall in Gram-positive bacteria, influencing the net charge of the cell wall. This is D-alanine--D-alanyl carrier protein ligase from Staphylococcus aureus (strain USA300).